Reading from the N-terminus, the 125-residue chain is Large ribosomal subunit protein bL19 (125 aa).

This sequence belongs to the bacterial ribosomal protein bL19 family.

This protein is located at the 30S-50S ribosomal subunit interface and may play a role in the structure and function of the aminoacyl-tRNA binding site. The polypeptide is Large ribosomal subunit protein bL19 (Wolbachia pipientis wMel).